A 383-amino-acid chain; its full sequence is Opsin Rh4 (383 aa).

The Extracellular segment spans residues 1 to 57; it reads MDIAGSLCNASEGPVLRPEARVSGNGDLQFLGWNVPPDQIQHIPEHWLTQLEPPASM. The N-linked (GlcNAc...) asparagine glycan is linked to Asn-9. A helical transmembrane segment spans residues 58–82; it reads HYMLGVFYIFLFCASTVGNGMVIWI. Residues 83-94 lie on the Cytoplasmic side of the membrane; the sequence is FSTSKALRTPSN. Residues 95–117 form a helical membrane-spanning segment; sequence MFVLNLAVFDFIMCLKAPIFIYN. At 118–133 the chain is on the extracellular side; it reads SFHRGFALGNTGCQIF. Cys-130 and Cys-207 form a disulfide bridge. A helical membrane pass occupies residues 134–153; sequence AAIGSYSGIGAGMTNAAIGY. Residues 154–171 are Cytoplasmic-facing; that stretch reads DRLNVITKPMNRNMTFTK. A helical membrane pass occupies residues 172–196; it reads AIIMNVIIWLYCTPWVVLPLTQFWD. Residues 197–220 are Extracellular-facing; the sequence is RFVPEGYLTSCTFDYLTDNFDTRL. The chain crosses the membrane as a helical span at residues 221–248; the sequence is FVGTIFFFSFVCPTLMIIYYYSQIVGHV. Residues 249 to 284 lie on the Cytoplasmic side of the membrane; it reads FSHEKALREQAKKMNVESLRSNVDKSKDTAEIRIAK. Residues 285–308 form a helical membrane-spanning segment; the sequence is AAITICFLFFVSWTPYGVMSLIGA. The Extracellular portion of the chain corresponds to 309–316; that stretch reads FGDKSLLT. A helical transmembrane segment spans residues 317 to 341; it reads PGATMIPACTCKLVACIDPFVYAIS. Lys-328 carries the post-translational modification N6-(retinylidene)lysine. Residues 342–383 are Cytoplasmic-facing; that stretch reads HPRYRMELQKRCPWLAIDEKAPESSSAASTTTTQEQQQTTAA. The segment at 361-383 is disordered; the sequence is KAPESSSAASTTTTQEQQQTTAA. The segment covering 364–383 has biased composition (low complexity); sequence ESSSAASTTTTQEQQQTTAA.

This sequence belongs to the G-protein coupled receptor 1 family. Opsin subfamily. In terms of processing, phosphorylated on some or all of the serine and threonine residues present in the C-terminal region.

The protein localises to the membrane. In terms of biological role, visual pigments are the light-absorbing molecules that mediate vision. They consist of an apoprotein, opsin, covalently linked to cis-retinal. This Drosophila virilis (Fruit fly) protein is Opsin Rh4 (Rh4).